Consider the following 80-residue polypeptide: Diphthamide biosynthesis protein 3 (80 aa).

The DPH-type MB domain occupies 4–60 (FHDEVEIEDFEFDEEKDVYHYPCPCGDRFEIPREMLEMGEDVAQCPSCSLLIRVIYD). 4 residues coordinate Fe cation: Cys26, Cys28, Cys48, and Cys51.

It belongs to the DPH3 family. In terms of assembly, component of the 2-(3-amino-3-carboxypropyl)histidine synthase complex composed of dph-1, dph-2, dph-3 and a NADH-dependent reductase. Requires Fe(2+) as cofactor.

The enzyme catalyses [3Fe-4S](1+)-[protein] + Fe(2+)-[Dph3] = [3Fe-4S](0)-[protein] + Fe(3+)-[Dph3]. The catalysed reaction is 2 [3Fe-4S](0)-[protein] + 2 Fe(2+)-[Dph3] + NADH = 2 [4Fe-4S](1+)-[protein] + 2 [Dph3] + NAD(+) + H(+). The protein operates within protein modification; peptidyl-diphthamide biosynthesis. Required for the first step of diphthamide biosynthesis, a post-translational modification of histidine which occurs in elongation factor 2. Dph-1 and dph-2 transfer a 3-amino-3-carboxypropyl (ACP) group from S-adenosyl-L-methionine (SAM) to a histidine residue, the reaction is assisted by a reduction system comprising dph-3 and a NADH-dependent reductase. Acts as an electron donor to reduce the Fe-S cluster in dph1-dph2 keeping the [4Fe-4S] clusters in the active and reduced state. Restores iron to dph-1-dph-2 iron-sulfur clusters which have degraded from [4Fe-4S] to [3Fe-4S] by donating an iron atom to reform [4Fe-4S] clusters, in a manner dependent on the presence of elongation factor 2 and SAM. Associates with the elongator complex and is required for tRNA Wobble base modifications mediated by the elongator complex. The elongator complex is required for multiple tRNA modifications, including mcm5U (5-methoxycarbonylmethyl uridine), mcm5s 2U (5-methoxycarbonylmethyl-2-thiouridine), and ncm5U (5-carbamoylmethyl uridine). This is Diphthamide biosynthesis protein 3 from Caenorhabditis elegans.